We begin with the raw amino-acid sequence, 359 residues long: Type-1 angiotensin II receptor (359 aa).

Residues 1–25 are Extracellular-facing; sequence MILNSSTEDGIKRIQDDCPKAGRHN. N-linked (GlcNAc...) (complex) asparagine glycosylation is present at Asn-4. Positions 15 and 17 each coordinate angiotensin II. 2 disulfides stabilise this stretch: Cys-18-Cys-274 and Cys-101-Cys-180. Residues 26-55 form a helical membrane-spanning segment; it reads YIFVMIPTLYSIIFVVGIFGNSLVVIVIYF. Over 56-61 the chain is Cytoplasmic; that stretch reads YMKLKT. A helical transmembrane segment spans residues 62–89; that stretch reads VASVFLLNLALADLCFLLTLPLWAVYTA. At 90–98 the chain is on the extracellular side; the sequence is MEYRWPFGN. A helical membrane pass occupies residues 99-125; it reads YLCKIASASVSFNLYASVFLLTCLSID. Residues 126 to 141 lie on the Cytoplasmic side of the membrane; it reads RYLAIVHPMKSRLRRT. Residues 142 to 165 traverse the membrane as a helical segment; sequence MLVAKVTCIIIWLLAGLASLPAII. Residues 166 to 190 lie on the Extracellular side of the membrane; the sequence is HRNVFFIENTNITVCAFHYESQNST. Residue Arg-167 coordinates angiotensin II. Asn-176 carries an N-linked (GlcNAc...) asparagine glycan. The angiotensin II site is built by Phe-182, His-183, and Tyr-184. N-linked (GlcNAc...) asparagine glycosylation occurs at Asn-188. A helical membrane pass occupies residues 191–216; that stretch reads LPIGLGLTKNILGFLFPFLIILTSYT. Lys-199 is an angiotensin II binding site. The Cytoplasmic portion of the chain corresponds to 217–239; that stretch reads LIWKALKKAYEIQKNKPRNDDIF. A helical transmembrane segment spans residues 240 to 268; it reads KIIMAIVLFFFFSWIPHQIFTFLDVLIQL. At 269–278 the chain is on the extracellular side; that stretch reads GIIRDCRIAD. Residues 279–304 traverse the membrane as a helical segment; the sequence is IVDTAMPITICIAYFNNCLNPLFYGF. Residues 305 to 359 are Cytoplasmic-facing; the sequence is LGKKFKRYFLQLLKYIPPKAKSHSNLSTKMSTLSYRPSDNVSSSTKKPAPCFEVE. Polar residues predominate over residues 335–350; the sequence is STLSYRPSDNVSSSTK. A disordered region spans residues 335 to 359; that stretch reads STLSYRPSDNVSSSTKKPAPCFEVE. Cys-355 carries S-palmitoyl cysteine lipidation.

The protein belongs to the G-protein coupled receptor 1 family. As to quaternary structure, interacts with MAS1. Interacts with ARRB1. Interacts with FLNA (via filamin repeat 21); increases PKA-mediated phosphorylation of FLNA. C-terminal Ser or Thr residues may be phosphorylated. As to expression, liver, lung, adrenal and adrenocortical adenomas.

It is found in the cell membrane. Strongly inhibited by anti-hypertensive drugs losartan, candesartan, valsartan, irbesartan, telmisartan, eprosartan, olmesartan and azilsartan, most of which share a common biphenyl-tetrazole scaffold. Its function is as follows. Receptor for angiotensin II, a vasoconstricting peptide, which acts as a key regulator of blood pressure and sodium retention by the kidney. The activated receptor in turn couples to G-alpha proteins G(q) (GNAQ, GNA11, GNA14 or GNA15) and thus activates phospholipase C and increases the cytosolic Ca(2+) concentrations, which in turn triggers cellular responses such as stimulation of protein kinase C. Functionally, (Microbial infection) During SARS coronavirus-2/SARS-CoV-2 infection, it is able to recognize and internalize the complex formed by secreted ACE2 and SARS-CoV-2 spike protein through DNM2/dynamin 2-dependent endocytosis. This chain is Type-1 angiotensin II receptor, found in Homo sapiens (Human).